The following is a 333-amino-acid chain: Phosphoribosylformylglycinamidine cyclo-ligase (333 aa).

It belongs to the AIR synthase family.

It is found in the cytoplasm. The enzyme catalyses 2-formamido-N(1)-(5-O-phospho-beta-D-ribosyl)acetamidine + ATP = 5-amino-1-(5-phospho-beta-D-ribosyl)imidazole + ADP + phosphate + H(+). Its pathway is purine metabolism; IMP biosynthesis via de novo pathway; 5-amino-1-(5-phospho-D-ribosyl)imidazole from N(2)-formyl-N(1)-(5-phospho-D-ribosyl)glycinamide: step 2/2. The polypeptide is Phosphoribosylformylglycinamidine cyclo-ligase (Clostridium perfringens (strain 13 / Type A)).